Reading from the N-terminus, the 105-residue chain is Heat shock protein HspQ (105 aa).

Belongs to the HspQ family.

It is found in the cytoplasm. Its function is as follows. Involved in the degradation of certain denaturated proteins, including DnaA, during heat shock stress. The protein is Heat shock protein HspQ of Escherichia fergusonii (strain ATCC 35469 / DSM 13698 / CCUG 18766 / IAM 14443 / JCM 21226 / LMG 7866 / NBRC 102419 / NCTC 12128 / CDC 0568-73).